An 868-amino-acid polypeptide reads, in one-letter code: MHEQYQPREIEAAAQSFWDEQKSFEVSEQPGKETYYCLSMFPYPSGKLHMGHVRNYTIGDVISRYQRMLGKNVLQPMGWDAFGMPAENAAMKNNVAPAKWTYENIAYMKSQLRSLGLAVDWSREVTTCKPDYYRWEQWLFTRLFEKGVIYRKNGTVNWDPIDQTVLANEQVIDGRGWRSGALIEKREIPMYYFKITAYADELLESLDELTGWPEQVKTMQRNWIGKSRGMEVQFPYNVDSIGESGTLKVFTTRPDTLMGATYVAVAAEHHLAALAAKNNPELQAFIAECKGGSVAEADVATQEKKGLPTGLFVEHPLTGEKLPVWVANYVLMHYGDGAVMAVPAHDERDFEFAHKYNLPVKSVVRTSSGDTNPAPWQDAYGEHGTLINSGEFDGLDFAGAFDAMEVALIKKNLGASRTQFRLRDWGISRQRYWGCPIPIIHCDACGDVPVPEDQLPVVLPEDVVPDGAGSPLARMPEFYECTCPKCGQPAKRETDTMDTFVESSWYYARYASPHFEGGLVEKSAADHWLPVDQYIGGIEHAILHLLYARFFHKLMRDEGLVSSNEPFKNLLTQGMVVAETYYRREANGAYTWFNPADVELERDSKAKVISAKLIADGLPVEIGGTEKMAKSKNNGVDPQSMIDQFGADTCRLFMMFASPPDMSAEWSDSGVEGSHRFLKRVWRLAQAHITQGLPGKLDIASLNDEQKVIRRAIHQAIKQASHDVGQNHKFNTAIAQVMTLMNVLEKAAQATEQDRALVQEGLETVTLLLAPITPHISHELWNRLGHADPVIDASWPVLDESALVQDSLTLVIQVNGKLRGQIEMPAAATREEVEAAARANENVLRFVDGLTIRKVIVVPGKLVNIVAS.

A 'HIGH' region motif is present at residues 42-52 (PYPSGKLHMGH). The 'KMSKS' region signature appears at 627 to 631 (KMAKS). Lysine 630 contacts ATP.

This sequence belongs to the class-I aminoacyl-tRNA synthetase family.

The protein resides in the cytoplasm. It carries out the reaction tRNA(Leu) + L-leucine + ATP = L-leucyl-tRNA(Leu) + AMP + diphosphate. The protein is Leucine--tRNA ligase of Pseudomonas fluorescens (strain Pf0-1).